The following is a 119-amino-acid chain: Hemerythrin-like protein (119 aa).

His26, His56, Glu60, His75, His79, His107, and Asp112 together coordinate Fe cation.

Belongs to the hemerythrin family.

Its function is as follows. Oxygen-binding protein. The oxygen-binding site contains two iron atoms. This chain is Hemerythrin-like protein (nfa1), found in Naegleria fowleri (Brain eating amoeba).